Consider the following 237-residue polypeptide: Phosphoribosylaminoimidazole-succinocarboxamide synthase (237 aa).

The protein belongs to the SAICAR synthetase family.

The enzyme catalyses 5-amino-1-(5-phospho-D-ribosyl)imidazole-4-carboxylate + L-aspartate + ATP = (2S)-2-[5-amino-1-(5-phospho-beta-D-ribosyl)imidazole-4-carboxamido]succinate + ADP + phosphate + 2 H(+). The protein operates within purine metabolism; IMP biosynthesis via de novo pathway; 5-amino-1-(5-phospho-D-ribosyl)imidazole-4-carboxamide from 5-amino-1-(5-phospho-D-ribosyl)imidazole-4-carboxylate: step 1/2. The sequence is that of Phosphoribosylaminoimidazole-succinocarboxamide synthase from Oceanobacillus iheyensis (strain DSM 14371 / CIP 107618 / JCM 11309 / KCTC 3954 / HTE831).